We begin with the raw amino-acid sequence, 92 residues long: UPF0223 protein SUB0967 (92 aa).

It belongs to the UPF0223 family.

In Streptococcus uberis (strain ATCC BAA-854 / 0140J), this protein is UPF0223 protein SUB0967.